A 426-amino-acid chain; its full sequence is Histidine--tRNA ligase (426 aa).

This sequence belongs to the class-II aminoacyl-tRNA synthetase family.

It is found in the cytoplasm. The catalysed reaction is tRNA(His) + L-histidine + ATP = L-histidyl-tRNA(His) + AMP + diphosphate + H(+). This is Histidine--tRNA ligase from Saccharolobus islandicus (strain Y.G.57.14 / Yellowstone #1) (Sulfolobus islandicus).